The following is a 101-amino-acid chain: Ascorbate-specific PTS system EIIB component (101 aa).

Positions 3–96 (VRILAVCGNG…KLLEVIKEHF (94 aa)) constitute a PTS EIIB type-2 domain. The active-site Phosphocysteine intermediate is cysteine 9. At cysteine 9 the chain carries Phosphocysteine.

It localises to the cytoplasm. It catalyses the reaction N(pros)-phospho-L-histidyl-[protein] + L-ascorbate(out) = L-ascorbate 6-phosphate(in) + L-histidyl-[protein]. Its function is as follows. The phosphoenolpyruvate-dependent sugar phosphotransferase system (sugar PTS), a major carbohydrate active transport system, catalyzes the phosphorylation of incoming sugar substrates concomitantly with their translocation across the cell membrane. The enzyme II UlaABC PTS system is involved in ascorbate transport. The chain is Ascorbate-specific PTS system EIIB component (ulaB) from Salmonella choleraesuis (strain SC-B67).